The primary structure comprises 197 residues: Probable molybdenum cofactor guanylyltransferase (197 aa).

GTP contacts are provided by residues 10–12 (LCG), Lys22, Asp73, and Asp102. Asp102 is a binding site for Mg(2+).

This sequence belongs to the MobA family. Mg(2+) serves as cofactor.

The protein resides in the cytoplasm. It catalyses the reaction Mo-molybdopterin + GTP + H(+) = Mo-molybdopterin guanine dinucleotide + diphosphate. Transfers a GMP moiety from GTP to Mo-molybdopterin (Mo-MPT) cofactor (Moco or molybdenum cofactor) to form Mo-molybdopterin guanine dinucleotide (Mo-MGD) cofactor. The chain is Probable molybdenum cofactor guanylyltransferase from Methanothermobacter thermautotrophicus (strain ATCC 29096 / DSM 1053 / JCM 10044 / NBRC 100330 / Delta H) (Methanobacterium thermoautotrophicum).